Consider the following 195-residue polypeptide: Small ribosomal subunit protein uS4c (195 aa).

One can recognise an S4 RNA-binding domain in the interval M82–N143.

It belongs to the universal ribosomal protein uS4 family. Part of the 30S ribosomal subunit. Contacts protein S5. The interaction surface between S4 and S5 is involved in control of translational fidelity.

It is found in the plastid. It localises to the chloroplast. In terms of biological role, one of the primary rRNA binding proteins, it binds directly to 16S rRNA where it nucleates assembly of the body of the 30S subunit. Its function is as follows. With S5 and S12 plays an important role in translational accuracy. This Watsonia angusta protein is Small ribosomal subunit protein uS4c (rps4).